Reading from the N-terminus, the 127-residue chain is Cytochrome c2 (127 aa).

The N-terminal stretch at 1-20 is a signal peptide; the sequence is MRKLVFGLFVLAASVAPAAA. A Pyrrolidone carboxylic acid modification is found at Q21. 4 residues coordinate heme c: C33, C36, H37, and M99.

It belongs to the cytochrome c family. Post-translationally, binds 1 heme c group covalently per subunit.

Functionally, cytochrome c2 is found mainly in purple, non-sulfur, photosynthetic bacteria where it functions as the electron donor to the oxidized bacteriochlorophyll in the photophosphorylation pathway. However, it may also have a role in the respiratory chain and is found in some non-photosynthetic bacteria. This Blastochloris viridis (Rhodopseudomonas viridis) protein is Cytochrome c2 (cycA).